Reading from the N-terminus, the 274-residue chain is MLRQTAFRSMKLNRTPGRYFTTAENMDTGSSQSPPDTEQKMQPMDEFTKEFLKNQIKLTELQRVILSAGSSIAALVDPRRHDMIACLGETTGVPALENIRDQMRNSDEGRQILEDKPRINTRTVNMDALKKLPENTFGYQYVSFMEKYEITPDSRMEVKFMDDPELAYVMTRYRETHDLVHTVFGMPTNMLGEVAIKWVEAINIGLPMCYGGAIFGAFRLRPKQRQNYLQRYLPWALRAGQRARPLMCVYWEKRWEQDIEELRKELNIEVLKVD.

A mitochondrion-targeting transit peptide spans 1–20 (MLRQTAFRSMKLNRTPGRYF). The disordered stretch occupies residues 13–40 (NRTPGRYFTTAENMDTGSSQSPPDTEQK). Positions 22–36 (TAENMDTGSSQSPPD) are enriched in polar residues. Zn(2+)-binding residues include histidine 177, aspartate 178, histidine 181, and glutamate 193.

This sequence belongs to the COQ4 family. Component of a multi-subunit COQ enzyme complex. It depends on Zn(2+) as a cofactor.

The protein localises to the mitochondrion inner membrane. The enzyme catalyses a 4-hydroxy-3-methoxy-5-(all-trans-polyprenyl)benzoate + H(+) = a 2-methoxy-6-(all-trans-polyprenyl)phenol + CO2. It participates in cofactor biosynthesis; ubiquinone biosynthesis. Functionally, lyase that catalyzes the C1-decarboxylation of 4-hydroxy-3-methoxy-5-(all-trans-polyprenyl)benzoic acid into 2-methoxy-6-(all-trans-polyprenyl)phenol during ubiquinone biosynthesis. In Aedes aegypti (Yellowfever mosquito), this protein is Ubiquinone biosynthesis protein COQ4 homolog, mitochondrial.